Consider the following 127-residue polypeptide: Probable toxin y4kH (127 aa).

Belongs to the MbcT/ParT/Res family.

Functionally, probable toxic component of a type II toxin-antitoxin (TA) system. It is not known which gene encodes its antitoxin. The sequence is that of Probable toxin y4kH from Sinorhizobium fredii (strain NBRC 101917 / NGR234).